A 252-amino-acid polypeptide reads, in one-letter code: Imidazole glycerol phosphate synthase subunit HisF (252 aa).

Residues Asp-11 and Asp-130 contribute to the active site.

It belongs to the HisA/HisF family. In terms of assembly, heterodimer of HisH and HisF.

It is found in the cytoplasm. The catalysed reaction is 5-[(5-phospho-1-deoxy-D-ribulos-1-ylimino)methylamino]-1-(5-phospho-beta-D-ribosyl)imidazole-4-carboxamide + L-glutamine = D-erythro-1-(imidazol-4-yl)glycerol 3-phosphate + 5-amino-1-(5-phospho-beta-D-ribosyl)imidazole-4-carboxamide + L-glutamate + H(+). Its pathway is amino-acid biosynthesis; L-histidine biosynthesis; L-histidine from 5-phospho-alpha-D-ribose 1-diphosphate: step 5/9. In terms of biological role, IGPS catalyzes the conversion of PRFAR and glutamine to IGP, AICAR and glutamate. The HisF subunit catalyzes the cyclization activity that produces IGP and AICAR from PRFAR using the ammonia provided by the HisH subunit. In Paramagnetospirillum magneticum (strain ATCC 700264 / AMB-1) (Magnetospirillum magneticum), this protein is Imidazole glycerol phosphate synthase subunit HisF.